Consider the following 660-residue polypeptide: Phosphatidylinositol-3-phosphate phosphatase MTMR7 (660 aa).

In terms of domain architecture, Myotubularin phosphatase spans G126 to Y504. A 1,2-diacyl-sn-glycero-3-phospho-(1D-myo-inositol-3-phosphate)-binding residues include N250, N275, and I276. C338 serves as the catalytic Phosphocysteine intermediate. Residues S339, D340, G341, W342, D343, R344, and R384 each contribute to the a 1,2-diacyl-sn-glycero-3-phospho-(1D-myo-inositol-3-phosphate) site. Residues R514–K558 adopt a coiled-coil conformation. The segment at K554–A660 is disordered. The segment covering S566 to Q596 has biased composition (polar residues). T578 carries the phosphothreonine modification. Residues A641–D653 are compositionally biased toward basic and acidic residues.

The protein belongs to the protein-tyrosine phosphatase family. Non-receptor class myotubularin subfamily. Heterodimer (via C-terminus) with MTMR9 (via coiled coil domain); the interaction enhances MTMR7 catalytic activity. Does not homodimerize. Interacts with RAB1B (in GDP-bound form).

Its subcellular location is the cytoplasm. It is found in the endomembrane system. It carries out the reaction a 1,2-diacyl-sn-glycero-3-phospho-(1D-myo-inositol-3-phosphate) + H2O = a 1,2-diacyl-sn-glycero-3-phospho-(1D-myo-inositol) + phosphate. The catalysed reaction is 1D-myo-inositol 1,3-bisphosphate + H2O = 1D-myo-inositol 1-phosphate + phosphate. Its activity is regulated as follows. Interaction with MTMR9 increases phosphatase activity. Functionally, lipid phosphatase that specifically dephosphorylates the D-3 position of phosphatidylinositol 3-phosphate (PtdIns(3)P) and inositol 1,3-bisphosphate (Ins(1,3)P2). The sequence is that of Phosphatidylinositol-3-phosphate phosphatase MTMR7 from Pongo abelii (Sumatran orangutan).